The following is a 61-amino-acid chain: Small ribosomal subunit protein uS14 (61 aa).

Positions 24, 27, 40, and 43 each coordinate Zn(2+).

This sequence belongs to the universal ribosomal protein uS14 family. Zinc-binding uS14 subfamily. As to quaternary structure, part of the 30S ribosomal subunit. Contacts proteins S3 and S10. Zn(2+) serves as cofactor.

In terms of biological role, binds 16S rRNA, required for the assembly of 30S particles and may also be responsible for determining the conformation of the 16S rRNA at the A site. The sequence is that of Small ribosomal subunit protein uS14 from Borreliella afzelii (strain PKo) (Borrelia afzelii).